The primary structure comprises 278 residues: Protein saf1 (278 aa).

Disordered regions lie at residues 1–43 (MLSK…RNMS), 81–210 (KKNI…DIEE), and 240–264 (QKLA…EDKD). 2 stretches are compositionally biased toward basic and acidic residues: residues 22–38 (QIKV…ERLS) and 90–103 (GRVE…AERQ). Composition is skewed to basic residues over residues 104 to 116 (HKPR…KNPK) and 169 to 183 (REKK…HHKK). Residues 186–202 (INASSAQPKSTTTTEAA) are compositionally biased toward polar residues.

The protein localises to the nucleus. It is found in the nucleolus. In Schizosaccharomyces pombe (strain 972 / ATCC 24843) (Fission yeast), this protein is Protein saf1 (saf1).